The sequence spans 217 residues: Large ribosomal subunit protein uL1 (217 aa).

Belongs to the universal ribosomal protein uL1 family. In terms of assembly, part of the 50S ribosomal subunit.

Its function is as follows. Binds directly to 23S rRNA. Probably involved in E site tRNA release. Protein L1 is also a translational repressor protein, it controls the translation of its operon by binding to its mRNA. The chain is Large ribosomal subunit protein uL1 from Hyperthermus butylicus (strain DSM 5456 / JCM 9403 / PLM1-5).